Consider the following 346-residue polypeptide: MRVEDFDFELPEELIAQTPLVDRTASRLMVVTPGSNEVEHQHFAHVLEELRTGDCLVLNDTRVLPARLMGVKEETGAHIEVLLLKQLPGTDEWETLVKPAKRVKVGTVITFGDGLLTATCTGELDHGGRTFEFHYDGIFFEILEQLGEMPLPPYIREKLEDKDRYQTVYAKERGSAAAPTAGLHFTEELLEQVKAKGVEVVFITLHVGLGTFRPVSVDSIENHEMHAEFYSVTEEAADTINRVKRNGGKIIAVGTTSTRTLETIGSKYDGEVRAEQGWTSIFIYPGYTFTVVDGLITNFHLPKSTLVMLVSTLATRETILSAYQQAVEEKYRFFSFGDAMFIRPKE.

It belongs to the QueA family. Monomer.

The protein resides in the cytoplasm. The catalysed reaction is 7-aminomethyl-7-carbaguanosine(34) in tRNA + S-adenosyl-L-methionine = epoxyqueuosine(34) in tRNA + adenine + L-methionine + 2 H(+). The protein operates within tRNA modification; tRNA-queuosine biosynthesis. Its function is as follows. Transfers and isomerizes the ribose moiety from AdoMet to the 7-aminomethyl group of 7-deazaguanine (preQ1-tRNA) to give epoxyqueuosine (oQ-tRNA). This is S-adenosylmethionine:tRNA ribosyltransferase-isomerase from Lysinibacillus sphaericus (strain C3-41).